Here is a 203-residue protein sequence, read N- to C-terminus: FMN-dependent NADH:quinone oxidoreductase 1 (203 aa).

FMN is bound by residues Ser-9, 15–17 (SAS), 95–98 (MYNF), and 139–142 (TAGG).

This sequence belongs to the azoreductase type 1 family. In terms of assembly, homodimer. FMN serves as cofactor.

It catalyses the reaction 2 a quinone + NADH + H(+) = 2 a 1,4-benzosemiquinone + NAD(+). The catalysed reaction is N,N-dimethyl-1,4-phenylenediamine + anthranilate + 2 NAD(+) = 2-(4-dimethylaminophenyl)diazenylbenzoate + 2 NADH + 2 H(+). Its function is as follows. Quinone reductase that provides resistance to thiol-specific stress caused by electrophilic quinones. Functionally, also exhibits azoreductase activity. Catalyzes the reductive cleavage of the azo bond in aromatic azo compounds to the corresponding amines. The protein is FMN-dependent NADH:quinone oxidoreductase 1 of Pseudomonas putida (strain ATCC 47054 / DSM 6125 / CFBP 8728 / NCIMB 11950 / KT2440).